The chain runs to 236 residues: Uridylate kinase (236 aa).

Residue 10 to 13 participates in ATP binding; it reads KLSG. G52 provides a ligand contact to UMP. Residues G53 and R57 each coordinate ATP. UMP-binding positions include D72 and 133–140; that span reads TGNPFFTT. The ATP site is built by T160, Y166, and D169.

This sequence belongs to the UMP kinase family. In terms of assembly, homohexamer.

It is found in the cytoplasm. The enzyme catalyses UMP + ATP = UDP + ADP. It functions in the pathway pyrimidine metabolism; CTP biosynthesis via de novo pathway; UDP from UMP (UMPK route): step 1/1. Inhibited by UTP. Its function is as follows. Catalyzes the reversible phosphorylation of UMP to UDP. The polypeptide is Uridylate kinase (Ralstonia nicotianae (strain ATCC BAA-1114 / GMI1000) (Ralstonia solanacearum)).